The following is a 315-amino-acid chain: MIDLCILGTTGGMPMVNKYLSATLININGRKILIDCGEGTQVAMREIGWGFKSIDLICITHSHGDHTIGLPGLLSTMGNSGRTEKVIIVGPKGIKEIVNGLNIINPYLPYELEVVELENNDLKFIIDKNNMFLCEDNDKCNLILSSLEVEHSAKCLSYSFYIKRRPRFSVEKASKNNVPKLLWSKLQNQEIVNYDNKIYTPDLVLDNARKGIKISYVTDTRPISTLPQFIKYSDLFICEGTYGSDEDIDKAIKNKHMTFRESATLAKKGECNELILTHFSAALSAPENFLNNAKEIFHNSIVAHDGLIKTLKFID.

Zn(2+)-binding residues include H61, H63, D65, H66, H151, D219, and H278. The active-site Proton acceptor is the D65.

This sequence belongs to the RNase Z family. In terms of assembly, homodimer. Zn(2+) serves as cofactor.

It carries out the reaction Endonucleolytic cleavage of RNA, removing extra 3' nucleotides from tRNA precursor, generating 3' termini of tRNAs. A 3'-hydroxy group is left at the tRNA terminus and a 5'-phosphoryl group is left at the trailer molecule.. In terms of biological role, zinc phosphodiesterase, which displays some tRNA 3'-processing endonuclease activity. Probably involved in tRNA maturation, by removing a 3'-trailer from precursor tRNA. In Clostridium botulinum (strain Alaska E43 / Type E3), this protein is Ribonuclease Z.